Here is an 87-residue protein sequence, read N- to C-terminus: Small ribosomal subunit protein bS18 (87 aa).

This sequence belongs to the bacterial ribosomal protein bS18 family. In terms of assembly, part of the 30S ribosomal subunit. Forms a tight heterodimer with protein bS6.

Its function is as follows. Binds as a heterodimer with protein bS6 to the central domain of the 16S rRNA, where it helps stabilize the platform of the 30S subunit. This Nitratidesulfovibrio vulgaris (strain DSM 19637 / Miyazaki F) (Desulfovibrio vulgaris) protein is Small ribosomal subunit protein bS18.